The sequence spans 279 residues: ATP synthase gamma chain (279 aa).

This sequence belongs to the ATPase gamma chain family. As to quaternary structure, F-type ATPases have 2 components, CF(1) - the catalytic core - and CF(0) - the membrane proton channel. CF(1) has five subunits: alpha(3), beta(3), gamma(1), delta(1), epsilon(1). CF(0) has three main subunits: a, b and c.

Its subcellular location is the cell membrane. Functionally, produces ATP from ADP in the presence of a proton gradient across the membrane. The gamma chain is believed to be important in regulating ATPase activity and the flow of protons through the CF(0) complex. This is ATP synthase gamma chain from Mycoplasma genitalium (strain ATCC 33530 / DSM 19775 / NCTC 10195 / G37) (Mycoplasmoides genitalium).